Here is a 787-residue protein sequence, read N- to C-terminus: MGRKVTVAVSTLNQWALDFEGNMVRILQSILEAKDMGASYRTGPELEVCGYSCEDHFREPDTFLHSWEVLLEVMMSPMCENMLVDVGMPVMHRNVAYNCRVAFFNRQILLIRPKMAMCDDGNYRESRWFTAWTKALQTEEYVLPRMIAQHTGQQTVPFGDAVIATRDTCLGYEICEELWNVRSKHIEMSLAGVELIVNSSGSYMELRKAHITSDLIRNASFKAGGAYLFSNLRGCDGQRVYFNGCSAIALNGEILARSQQFALQDVEVTLATIDLEEIRAYRVSLRSRCTAAASAAEYPRIHCDFEMSTHSDIFKTSTPPLNWPMHTPEEEIALGPACWLWDYLRRSGQGGFFLPLSGGVDSSSSATIVHSMCRQIVQAVQQGDAQVLHDIRQLLADSDYTPDNAAGLCNRLLVTCYMGSVNSSKETRRRAAQLANQLGSYHIEISIDSAVNALLSIFNAVTGLTPRFRTQGGCARQNLALQNMQSRIRMVLAYIFAQLTLWVRNRPGGLLVLGSANVDESLRGYLTKYDCSSADINPIGGISKMDLRRFLTYAKDKFNLPVLESIIDAPPTAELEPLQENGELQQTDEADMGMTYAELSQFGRLRKQSFCGPYSMFCHLVATWKSDLSPKEVAEKVKHFFLCYAINRHKMTVLTPSVHAESYSPDDNRFDHRPFLYRPNWSWQFKAIDDEAEKLQPIYTPSSAQLRPSSEDLLISTQRSSHLDDSKHSSPLSSASASASIDVGISTAAVPLPGAAAPGGLSKKPSGYSKVHVNVLGKIKDRTGIPV.

Residues 5–275 (VTVAVSTLNQ…VEVTLATIDL (271 aa)) enclose the CN hydrolase domain. Catalysis depends on Glu45, which acts as the Proton acceptor; for glutaminase activity. The For glutaminase activity role is filled by Lys114. Cys175 functions as the Nucleophile; for glutaminase activity in the catalytic mechanism. Positions 325–787 (MHTPEEEIAL…KIKDRTGIPV (463 aa)) are ligase. ATP is bound at residue 355–362 (PLSGGVDS). Ser357 is an active-site residue. A Phosphoserine modification is found at Ser703.

In the C-terminal section; belongs to the NAD synthetase family.

The enzyme catalyses deamido-NAD(+) + L-glutamine + ATP + H2O = L-glutamate + AMP + diphosphate + NAD(+) + H(+). Its pathway is cofactor biosynthesis; NAD(+) biosynthesis; NAD(+) from deamido-NAD(+) (L-Gln route): step 1/1. Catalyzes the ATP-dependent amidation of deamido-NAD to form NAD. Uses L-glutamine as a nitrogen source. Because of its role in energy metabolism, involved in the modulation of aged-related cardiac function, mobility, and lifespan. The sequence is that of Glutamine-dependent NAD(+) synthetase from Drosophila melanogaster (Fruit fly).